The sequence spans 89 residues: MAKKSKIAKAKRQEKLVKQYATKRAALKAKGDYIGLSKLPRDSSPVRLHHRDVLDGRPHAYMRKFGMSRLNFRELAHKGQIPGVRKASW.

This sequence belongs to the universal ribosomal protein uS14 family. As to quaternary structure, part of the 30S ribosomal subunit. Contacts proteins S3 and S10.

Binds 16S rRNA, required for the assembly of 30S particles and may also be responsible for determining the conformation of the 16S rRNA at the A site. The sequence is that of Small ribosomal subunit protein uS14 from Lacticaseibacillus casei (strain BL23) (Lactobacillus casei).